Reading from the N-terminus, the 315-residue chain is ADP/ATP translocase (315 aa).

Over 1–13 (MSNKQETKILGMP) the chain is Mitochondrial intermembrane. Solcar repeat units follow at residues 13 to 106 (PPFV…FKAM) and 118 to 210 (KWMA…IKPV). Residues 14–37 (PFVVDFLMGGVSAAVSKTAAAPIE) form a helical membrane-spanning segment. Lys30 lines the bongkrekate pocket. The Mitochondrial matrix portion of the chain corresponds to 38–80 (RIKLLVQNQDEMIKAGRLDRRYNGIIDCFRRTTADEGLMALWR). A cardiolipin is bound by residues Ile62 and 81 to 83 (GNT). A helical membrane pass occupies residues 81-104 (GNTANVIRYFPTQALNFAFRDKFK). Arg88 is an ADP binding site. Residues 88 to 89 (RY) and Asn96 each bind bongkrekate. Residues 105–115 (AMFGYKKDKDG) lie on the Mitochondrial intermembrane side of the membrane. A helical transmembrane segment spans residues 116–145 (YAKWMAGNLASGGAAGATSLLFVYSLDYAR). The Mitochondrial matrix portion of the chain corresponds to 146-184 (TRLANDAKSAKGGGARQFNGLIDVYRKTLASDGIAGLYR). A cardiolipin contacts are provided by residues Leu166 and 184 to 185 (RG). A helical transmembrane segment spans residues 185–213 (GFGPSVAGIVVYRGLYFGMYDSIKPVVLV). Residue 196 to 197 (YR) participates in bongkrekate binding. Over 214-216 (GPL) the chain is Mitochondrial intermembrane. A helical transmembrane segment spans residues 217–242 (ANNFLASFLLGWCVTTGAGIASYPLD). Residues 218–304 (NNFLASFLLG…LSIYDQLQIL (87 aa)) form a Solcar repeat. Over 243 to 283 (TVRRRMMMTSGEAVKYKSSIDAFRQIIAKEGVKSLFKGAGA) the chain is Mitochondrial matrix. Arg245 serves as a coordination point for ADP. The Nucleotide carrier signature motif motif lies at 245–250 (RRRMMM). A cardiolipin is bound by residues 260–261 (SS) and 280–282 (GAG). Residues 284-304 (NILRGVAGAGVLSIYDQLQIL) traverse the membrane as a helical segment. Residues 305–315 (LFGKAFKGGSG) are Mitochondrial intermembrane-facing.

The protein belongs to the mitochondrial carrier (TC 2.A.29) family. As to quaternary structure, monomer.

It localises to the mitochondrion inner membrane. The catalysed reaction is ADP(in) + ATP(out) = ADP(out) + ATP(in). Its activity is regulated as follows. The matrix-open state (m-state) is inhibited by the membrane-permeable bongkrekic acid (BKA). The cytoplasmic-open state (c-state) is inhibited by the membrane-impermeable toxic inhibitor carboxyatractyloside (CATR). In terms of biological role, ADP:ATP antiporter that mediates import of ADP into the mitochondrial matrix for ATP synthesis, and export of ATP out to fuel the cell. Cycles between the cytoplasmic-open state (c-state) and the matrix-open state (m-state): operates by the alternating access mechanism with a single substrate-binding site intermittently exposed to either the cytosolic (c-state) or matrix (m-state) side of the inner mitochondrial membrane. This Thermothelomyces thermophilus (strain ATCC 42464 / BCRC 31852 / DSM 1799) (Sporotrichum thermophile) protein is ADP/ATP translocase.